A 142-amino-acid polypeptide reads, in one-letter code: Mitochondrial import receptor subunit TOM22 homolog (142 aa).

The span at 1–11 (MAAAVAAAGAG) shows a compositional bias: low complexity. The interval 1–40 (MAAAVAAAGAGEPLSPEELVPKAEAEKAEEDLEEDDDDEL) is disordered. A2 bears the N-acetylalanine mark. Residues 2 to 82 (AAAVAAAGAG…VAQKMYRFSR (81 aa)) are Cytoplasmic-facing. S15 carries the post-translational modification Phosphoserine. Over residues 27-40 (KAEEDLEEDDDDEL) the composition is skewed to acidic residues. The tract at residues 41 to 50 (DETLSERLWG) is import sequence; necessary for mitochondrion outer membrane localization and integration in the TOM complex. A Phosphothreonine modification is found at T43. S45 bears the Phosphoserine mark. A helical transmembrane segment spans residues 83 to 103 (AALWIGTTSFMILVLPVVFET). Residues 83 to 103 (AALWIGTTSFMILVLPVVFET) are TMD; necessary for mitochondrion outer membrane localization and integration in the TOM complex. Residues 104–142 (EKLQMEQQQQLQQRQILLGPNTGLSGGMPGALPPLPGKI) lie on the Mitochondrial intermembrane side of the membrane. Residues 123–142 (PNTGLSGGMPGALPPLPGKI) form a C-tail signal; necessary for mitochondrion outer membrane localization and integration in the TOM complex region.

This sequence belongs to the Tom22 family. In terms of assembly, forms part of the preprotein translocase complex of the outer mitochondrial membrane (TOM complex) which consists of at least 7 different proteins (TOMM5, TOMM6, TOMM7, TOMM20, TOMM22, TOMM40 and TOMM70). Interacts with TOMM40. Interacts with PPP2R2B.

Its subcellular location is the mitochondrion outer membrane. In terms of biological role, central receptor component of the translocase of the outer membrane of mitochondria (TOM complex) responsible for the recognition and translocation of cytosolically synthesized mitochondrial preproteins. Together with the peripheral receptor TOM20 functions as the transit peptide receptor and facilitates the movement of preproteins into the translocation pore. Required for the translocation across the mitochondrial outer membrane of cytochrome P450 monooxygenases. The polypeptide is Mitochondrial import receptor subunit TOM22 homolog (Tomm22) (Rattus norvegicus (Rat)).